A 613-amino-acid chain; its full sequence is Protein translocase subunit SecD (613 aa).

6 consecutive transmembrane segments (helical) span residues 10–30 (ALVV…WFYF), 452–472 (KGTL…VVYY), 477–497 (LVAD…MSMI), 503–523 (LPGI…NVLI), 548–568 (VFWT…VLFQ), and 576–596 (GFAV…IVVT).

Belongs to the SecD/SecF family. SecD subfamily. Forms a complex with SecF. Part of the essential Sec protein translocation apparatus which comprises SecA, SecYEG and auxiliary proteins SecDF-YajC and YidC.

It is found in the cell inner membrane. Functionally, part of the Sec protein translocase complex. Interacts with the SecYEG preprotein conducting channel. SecDF uses the proton motive force (PMF) to complete protein translocation after the ATP-dependent function of SecA. This chain is Protein translocase subunit SecD, found in Anaeromyxobacter dehalogenans (strain 2CP-C).